A 285-amino-acid chain; its full sequence is Retron Ec67 DNA adenine methylase (285 aa).

The S-adenosyl-L-methionine site is built by Trp7, Lys11, Asp51, and Asp179.

Belongs to the N(4)/N(6)-methyltransferase family.

It catalyses the reaction a 2'-deoxyadenosine in DNA + S-adenosyl-L-methionine = an N(6)-methyl-2'-deoxyadenosine in DNA + S-adenosyl-L-homocysteine + H(+). Functionally, an alpha subtype methylase that recognizes the double-stranded sequence 5'-GATC-3' and methylates A-2 on both strands. May play a regulatory role in the functions of the retron. The sequence is that of Retron Ec67 DNA adenine methylase from Escherichia coli.